The following is a 160-amino-acid chain: SsrA-binding protein (160 aa).

The segment at 135-160 (KTHDKRETIKERDWKREQSRILRDRG) is disordered. Positions 138–160 (DKRETIKERDWKREQSRILRDRG) are enriched in basic and acidic residues.

The protein belongs to the SmpB family.

It localises to the cytoplasm. Required for rescue of stalled ribosomes mediated by trans-translation. Binds to transfer-messenger RNA (tmRNA), required for stable association of tmRNA with ribosomes. tmRNA and SmpB together mimic tRNA shape, replacing the anticodon stem-loop with SmpB. tmRNA is encoded by the ssrA gene; the 2 termini fold to resemble tRNA(Ala) and it encodes a 'tag peptide', a short internal open reading frame. During trans-translation Ala-aminoacylated tmRNA acts like a tRNA, entering the A-site of stalled ribosomes, displacing the stalled mRNA. The ribosome then switches to translate the ORF on the tmRNA; the nascent peptide is terminated with the 'tag peptide' encoded by the tmRNA and targeted for degradation. The ribosome is freed to recommence translation, which seems to be the essential function of trans-translation. The chain is SsrA-binding protein from Sphingomonas elodea.